A 266-amino-acid polypeptide reads, in one-letter code: Probable sporulation sigma-E factor-processing peptidase (266 aa).

Helical transmembrane passes span 36 to 52 (LILAGIFGGLYVIVLVI), 60 to 76 (SLIFKIIAAFLMIIICF), 89 to 105 (AVLIMYSMVTAGLCFFI), and 126 to 142 (WILIAIMIIYMFVNRII). The active site involves aspartate 174.

The protein belongs to the peptidase U4 family.

Its subcellular location is the cell membrane. Its function is as follows. Probable aspartic protease that is responsible for the proteolytic cleavage of the RNA polymerase sigma E factor (SigE/spoIIGB) to yield the active peptide in the mother cell during sporulation. Responds to a signal from the forespore that is triggered by the extracellular signal protein SpoIIR. The polypeptide is Probable sporulation sigma-E factor-processing peptidase (spoIIGA) (Clostridium acetobutylicum (strain ATCC 824 / DSM 792 / JCM 1419 / IAM 19013 / LMG 5710 / NBRC 13948 / NRRL B-527 / VKM B-1787 / 2291 / W)).